The chain runs to 105 residues: Late embryogenesis abundant protein Lea5-D (105 aa).

The disordered stretch occupies residues 48-67 (KVERRDAMKESSSSETRAYS). Over residues 57-67 (ESSSSETRAYS) the composition is skewed to low complexity.

This sequence belongs to the LEA type 3 family.

The sequence is that of Late embryogenesis abundant protein Lea5-D (LEA5-D) from Gossypium hirsutum (Upland cotton).